The following is a 178-amino-acid chain: Ribosome maturation factor RimP (178 aa).

It belongs to the RimP family.

It is found in the cytoplasm. In terms of biological role, required for maturation of 30S ribosomal subunits. In Caulobacter vibrioides (strain ATCC 19089 / CIP 103742 / CB 15) (Caulobacter crescentus), this protein is Ribosome maturation factor RimP.